The following is a 158-amino-acid chain: uncharacterized protein (158 aa).

This is an uncharacterized protein from Saccharomyces cerevisiae (strain ATCC 204508 / S288c) (Baker's yeast).